Reading from the N-terminus, the 468-residue chain is MTHEEIKGKRCAIIGGKRSGIAAAKLLSRAGAYVFLSEKSVPENQATLESDLRAHGIECEFGQHSEEVFDADFAIISPGVPSSAPVIKQLERAQVPVYSEIELASWFCKAKIIAITGTDGKTTVTTLTKKIFEADGNENGYHAYALGNIGQPFSDTVESLSENDVAVIEISSFQLEHCTSFRPNVTVITNITPDHLDRYDGNIQKYAAAKYRIYQNQTASDWLIYNDDNEILHQHFTDPERRASLPMKLVALSLEKNLGDEYEHCAYKENGRLVLKLTNEKEWLIEENQISTKQFRGQHNIYNALTAAAAASALGIDKKFIEKSILSFEGVEHRLEFVRAVNQVDYINDSKATTVNALWYALDTVTPKIVLIAGGRDKGNDYTKVFSFVKEKVRAVVAIGESQEKVVQAFGNLTKVMKAFSLDEAVRLASQEAEAGDTVLLSPACASFDMFSNFETRGKLFKEAVMNL.

Residue 117-123 participates in ATP binding; the sequence is GTDGKTT.

The protein belongs to the MurCDEF family.

The protein localises to the cytoplasm. It catalyses the reaction UDP-N-acetyl-alpha-D-muramoyl-L-alanine + D-glutamate + ATP = UDP-N-acetyl-alpha-D-muramoyl-L-alanyl-D-glutamate + ADP + phosphate + H(+). It participates in cell wall biogenesis; peptidoglycan biosynthesis. Functionally, cell wall formation. Catalyzes the addition of glutamate to the nucleotide precursor UDP-N-acetylmuramoyl-L-alanine (UMA). The polypeptide is UDP-N-acetylmuramoylalanine--D-glutamate ligase (Chloroherpeton thalassium (strain ATCC 35110 / GB-78)).